The following is a 722-amino-acid chain: PAB1-binding protein 1 (722 aa).

Basic and acidic residues predominate over residues 1–10 (MKGNFRKRDS). Residues 1–38 (MKGNFRKRDSSTNSRKGGNSDSNYTNGGVPNQNNSSMF) form a disordered region. Residues 11–38 (STNSRKGGNSDSNYTNGGVPNQNNSSMF) show a composition bias toward polar residues. In terms of domain architecture, Sm spans 51–107 (RQDYLLANSIGSDVTVTVTSGVKYTGLLVSCNLESTNGIDVVLRFPRVADSGVSDSV). Serine 106 bears the Phosphoserine mark. Threonine 193 carries the post-translational modification Phosphothreonine. Serine 215 bears the Phosphoserine mark. 3 disordered regions span residues 305–380 (ALKS…LSSK), 412–488 (SSTL…NPHT), and 683–722 (GSGP…SGHK). Composition is skewed to low complexity over residues 307 to 316 (KSNSKPNSNK), 338 to 347 (SSSNSNKNEN), 356 to 370 (PAAA…PQKT), and 412 to 421 (SSTLKSNSSL). A Glycyl lysine isopeptide (Lys-Gly) (interchain with G-Cter in ubiquitin) cross-link involves residue lysine 344. Polar residues predominate over residues 429–455 (TPSAKTVSPTTQISAGKSESRRSGSNI). Serine 436 bears the Phosphoserine mark. Low complexity predominate over residues 456-471 (SQGQSSTGHTTRSSTS). Basic residues predominate over residues 698 to 722 (SHGHSRNYHQTSHHGHHNSSTSGHK).

The protein belongs to the ataxin-2 family. Interacts (via C-terminus) with MKT1 (via C-terminus). Interacts with FIR1, IGO1, LSM12, PBP4 and PAB1.

It localises to the cytoplasm. Its subcellular location is the nucleus. The protein resides in the mitochondrion. Functionally, involved in pre-mRNA polyadenylation. May act to repress the ability of PAB1 to negatively regulate polyadenylation. Negative regulator of poly(A) nuclease (PAN) activity. Promotes mating-type switching in mother cells by positively regulating HO mRNA translation. Localizes MKT1 to polysomes. The protein is PAB1-binding protein 1 (PBP1) of Saccharomyces cerevisiae (strain ATCC 204508 / S288c) (Baker's yeast).